We begin with the raw amino-acid sequence, 790 residues long: Protein sel-1 homolog 1 (790 aa).

The N-terminal stretch at 1-21 (MQVRVRLSLLLLCAVLLGSAA) is a signal peptide. A disordered region spans residues 22-51 (ATSDDKTNQDDSLDSKSSLPTDESVKDHTT). The Lumenal segment spans residues 22 to 734 (ATSDDKTNQD…LFTQLDMDQL (713 aa)). The tract at residues 23–733 (TSDDKTNQDD…DLFTQLDMDQ (711 aa)) is interaction with ERLEC1, OS9 and SYVN1. S64 is modified (phosphoserine). The span at 67–78 (AEVESLLQDEED) shows a compositional bias: acidic residues. A disordered region spans residues 67-98 (AEVESLLQDEEDSSKTQEEEISFLESPNPSSK). The Fibronectin type-II domain maps to 118–166 (AHGEPCHFPFLFLDKEYDECTSDGREDGRLWCATTYDYKTDEKWGFCET). 2 cysteine pairs are disulfide-bonded: C123-C149 and C137-C164. Sel1-like repeat units lie at residues 179–214 (AEMI…GMNH), 215–250 (TKAL…EEGS), 251–286 (PKGQ…LGGN), 287–322 (LIAH…NHVA), 369–405 (VQAQ…NAGN), 406–442 (SHAM…DMGN), 443–478 (PVGQ…EQGW), 479–514 (VDGQ…QGGH), and 515–550 (ILAF…ERGR). Residues N191 and N213 are each glycosylated (N-linked (GlcNAc...) asparagine). A glycan (N-linked (GlcNAc...) asparagine) is linked at N268. Residues 348-533 (NSGMLEEDLI…MHASGTGVMR (186 aa)) form an important for homodimerization and oligomerization region. Residue N427 is glycosylated (N-linked (GlcNAc...) asparagine). A glycan (N-linked (GlcNAc...) asparagine) is linked at N604. Sel1-like repeat units lie at residues 623-658 (TVAR…EQQH) and 660-695 (AQAM…EASP). Residues 639–719 (TDVDYETAFI…VVYFLQYIRE (81 aa)) are interaction with SYVN1. The interval 734–790 (LLGPEWDLYLMTIIALLLGTVIAYRQRQHQDIPVPRPPGPRPAPPQQEGPPEQQPPQ) is mediates retention in the endoplasmic reticulum. The helical transmembrane segment at 735 to 755 (LGPEWDLYLMTIIALLLGTVI) threads the bilayer. Topologically, residues 756 to 790 (AYRQRQHQDIPVPRPPGPRPAPPQQEGPPEQQPPQ) are cytoplasmic. Positions 763–790 (QDIPVPRPPGPRPAPPQQEGPPEQQPPQ) are disordered. Positions 767-790 (VPRPPGPRPAPPQQEGPPEQQPPQ) are enriched in pro residues.

Belongs to the sel-1 family. In terms of assembly, homodimer and homooligomer. May form a complex with ERLEC1, HSPA5, OS9, and SYVN1. Interacts with FOXRED2 and EDEM1. Interacts with LPL and LMF1; may stabilize the complex formed by LPL and LMF1 and thereby promote the export of LPL dimers. Component of the HRD1 complex, which comprises at least SYNV1/HRD1, DERL1/2, FAM8A1, HERPUD1/HERP, OS9, SEL1L and UBE2J1. SYNV1 assembles with SEL1L and FAM8A1 through its transmembrane domains, but interaction with its cytoplasmic domain is required to confer stability to FAM8A1 and enhance recruitment of HERPUD1. The interaction with SYNV1/HRD1 is direct. Post-translationally, N-glycosylated. As to expression, highly expressed in pancreas, white adipose tissue, liver and spleen (at protein level). Detected in heart, brain, spleen, lung, liver, kidney and testis.

The protein resides in the endoplasmic reticulum membrane. In terms of biological role, plays a role in the endoplasmic reticulum quality control (ERQC) system also called ER-associated degradation (ERAD) involved in ubiquitin-dependent degradation of misfolded endoplasmic reticulum proteins. Enhances SYVN1 stability. Plays a role in LPL maturation and secretion. Required for normal differentiation of the pancreas epithelium, and for normal exocrine function and survival of pancreatic cells. May play a role in Notch signaling. The polypeptide is Protein sel-1 homolog 1 (Sel1l) (Mus musculus (Mouse)).